A 584-amino-acid chain; its full sequence is AP-1-like transcription factor yap1 (584 aa).

Positions 23-179 (LAALSSNQPP…AFRERKEKHL (157 aa)) are disordered. Positions 35-42 (QQNDKQRS) match the Bipartite nuclear localization signal motif. Residues 36–48 (QNDKQRSQAKTDP) are compositionally biased toward basic and acidic residues. Over residues 52-67 (PGNMSSGSFSMSPGFN) the composition is skewed to low complexity. The Bipartite nuclear localization signal signature appears at 68–75 (KTHPGSGG). A compositionally biased stretch (acidic residues) spans 79–94 (GDDESPFLDFNPELDF). 2 stretches are compositionally biased toward basic and acidic residues: residues 112–144 (SEEH…DKAA) and 170–179 (AFRERKEKHL). The 64-residue stretch at 154–217 (SEPTSKRKAQ…ERLQVELREY (64 aa)) folds into the bZIP domain. Positions 159–180 (KRKAQNRAAQRAFRERKEKHLK) are basic motif. The segment at 182–189 (LETKVDEL) is leucine-zipper. The segment at 211–332 (QVELREYRKR…PSPKVPSVYN (122 aa)) is transcription activation 1. 2 disordered regions span residues 267 to 379 (IFNG…TKLN) and 418 to 441 (RGKS…TPGP). Positions 284–296 (SSPATSDSQVPGV) are n-CRD. Residues 300 to 309 (ETLNGSNNRG) are compositionally biased toward polar residues. Residues 336–362 (SASSHDSSNSCSPSSSSDSHQSQMLSS) are compositionally biased toward low complexity. Polar residues-rich tracts occupy residues 363–379 (NGTS…TKLN) and 422–437 (ESVS…NYEQ). The transcription activation 2 stretch occupies residues 377 to 480 (KLNDSVQNHH…SQDFGTFFDD (104 aa)). Disulfide bonds link Cys-531/Cys-555, Cys-531/Cys-564, and Cys-555/Cys-564. The segment at 531–564 (CTKIWDRLQSMEKFRNGEIDVDNLCSELRTKARC) is c-CRD. The short motif at 549–556 (IDVDNLCS) is the Nuclear export signal element.

It belongs to the bZIP family. YAP subfamily. Post-translationally, depending on the oxidative stress inducing agent, yap1 can undergo two distinct conformational changes, both involving disulfide bond formation, and both masking the nuclear export signal, thus abolishing nuclear export.

It localises to the nucleus. The protein resides in the cytoplasm. Transcription activator involved in oxidative stress response and redox homeostasis. Regulates the transcription of genes encoding antioxidant enzymes and components of the cellular thiol-reducing pathways. May be involved in antifungal resistance to voriconazole. The protein is AP-1-like transcription factor yap1 of Aspergillus flavus (strain ATCC 200026 / FGSC A1120 / IAM 13836 / NRRL 3357 / JCM 12722 / SRRC 167).